Reading from the N-terminus, the 356-residue chain is Putative zinc finger protein At1g68190 (356 aa).

Positions 14, 17, 37, 42, 57, 60, 80, and 85 each coordinate Zn(2+). The segment at 14-56 (CEFCKAYRAVVYCIADTANLCLTCDAKVHSANSLSGRHLRTVL) adopts a B box-type 1; atypical zinc-finger fold. A B box-type 2; atypical zinc finger spans residues 57-97 (CDSCKNQPCVVRCFDHKMFLCHGCNDKFHGGGSSEHRRRDL). Positions 159-178 (ENGSSSLTERGDPSPLELPK) are disordered.

It belongs to the CONSTANS family.

It is found in the nucleus. This Arabidopsis thaliana (Mouse-ear cress) protein is Putative zinc finger protein At1g68190.